The following is a 1362-amino-acid chain: Bromodomain-containing protein 4B (1362 aa).

6 disordered regions span residues 22-57 (EGAQMSGQQQPAQPQPQTPMMQTPPPEIARPNQPKR), 200-243 (SLGD…HPPA), 274-367 (LANH…DSKT), 476-639 (DEPE…SYEE), 699-941 (CLRK…TQSP), and 953-1349 (SQAP…MNFQ). Residues 34-49 (QPQPQTPMMQTPPPEI) are compositionally biased toward pro residues. The 107-residue stretch at 57 to 163 (RQTNQLQYLL…KLFLQKISEM (107 aa)) folds into the Bromo 1 domain. The segment covering 219 to 234 (TPTPPAVIRAPTPPQT) has biased composition (pro residues). Residues 326–342 (PRKESGRQIRPIKKTEV) are compositionally biased toward basic and acidic residues. Positions 348-358 (PAPPDLHPQPA) are enriched in pro residues. The Bromo 2 domain maps to 365-474 (SKTSEQLRYC…DVFEMRFAKM (110 aa)). Residues 481 to 503 (APAPVPSPAPGPPAPSIKIPPPT) show a composition bias toward pro residues. The segment at 503 to 521 (TSSDTSSDSSSDSESSSDS) is NPS region. Low complexity predominate over residues 504 to 516 (SSDTSSDSSSDSE). Positions 542–597 (QLAALSQPQPNKPKKKEREKRKEKHKRKEEVEETRKGRIREPPAKKPKKSVQVSGG) are BID region. Positions 553 to 568 (KPKKKEREKRKEKHKR) are enriched in basic residues. Residues 569 to 585 (KEEVEETRKGRIREPPA) show a composition bias toward basic and acidic residues. Pro residues predominate over residues 606-621 (PPPVTRPARPAPPPAP). The 85-residue stretch at 623 to 707 (ESSEEDTQRC…SCLRKKRKPQ (85 aa)) folds into the NET domain. Residues 628-639 (DTQRCRPMSYEE) are compositionally biased toward basic and acidic residues. The span at 722 to 737 (SYSSSESESSSESSTS) shows a compositional bias: low complexity. A compositionally biased stretch (basic residues) spans 750-766 (QKKKGHSGRESRKHHHP). Pro residues-rich tracts occupy residues 772–793 (IAPPPVMKPPSPTLAPSYPPPS) and 871–889 (PARPPSASPPLPPPQPHHQ). Residues 893-905 (HVHHHHHHHHHAQ) are compositionally biased toward basic residues. Residues 926-941 (YLQQLHKSQQPPTQSP) are compositionally biased toward polar residues. 4 stretches are compositionally biased toward low complexity: residues 953–963 (SQAPMAAPAQS), 977–1006 (SSASPAPSPASSHIHQMQSPPVVPQQQPAG), 1014–1028 (QQQQQQQQQQHPALQ), and 1041–1050 (HQQAKQQQVI). The C-terminal (CTD) region stretch occupies residues 1061-1361 (RQQKQETYPG…LMEIFEQNLF (301 aa)). The segment covering 1086–1099 (QVPPYPGLTHPPSP) has biased composition (pro residues). A compositionally biased stretch (basic and acidic residues) spans 1186-1207 (PEKEKQKQEPKTPVAPKKDLKI). Polar residues predominate over residues 1224–1234 (PTSAGKSTSDS). Residues 1236 to 1293 (ELFRRQAREKEERERALKHQAEQAERMRREQERMRTREDDDVQDQTRKAHEEARRRQE) show a composition bias toward basic and acidic residues. The span at 1308–1319 (PAAPSPAQSSQP) shows a compositional bias: low complexity. The span at 1322–1334 (DQREMARKREQER) shows a compositional bias: basic and acidic residues.

The protein belongs to the BET family.

The protein resides in the nucleus. It localises to the chromosome. In terms of biological role, chromatin reader protein that recognizes and binds acetylated histones and plays a key role in transmission of epigenetic memory across cell divisions and transcription regulation. Remains associated with acetylated chromatin throughout the entire cell cycle and provides epigenetic memory for postmitotic G1 gene transcription by preserving acetylated chromatin status and maintaining high-order chromatin structure. During interphase, plays a key role in regulating the transcription of signal-inducible genes by associating with the P-TEFb complex and recruiting it to promoters. This chain is Bromodomain-containing protein 4B (brd4-b), found in Xenopus laevis (African clawed frog).